We begin with the raw amino-acid sequence, 133 residues long: Ribonuclease VapC17 (133 aa).

Mg(2+) contacts are provided by Asp7 and Asp93. The PINc domain occupies 30–118 (AICDIGELEW…HHDRDYKRIA (89 aa)).

Belongs to the PINc/VapC protein family. It depends on Mg(2+) as a cofactor.

Functionally, toxic component of a type II toxin-antitoxin (TA) system. An RNase. The cognate antitoxin is VapB17. In Mycobacterium tuberculosis (strain CDC 1551 / Oshkosh), this protein is Ribonuclease VapC17.